Reading from the N-terminus, the 1322-residue chain is MFPMQFTNSAYRQMEPMFAPASRGQVQPYRPRTKRRQEPQVGNAAIAALANQMSALQLQVAGLAGQARVDRRGPRRVQKNKQKKKNSSNGEKPKEKKKKQKQQEKKGSGGEKAKKPRNRPGKEVRISVKRARQSTFPVYHDGAISGYAVLIGSRVFKPAHVKGKFDHPELADIKFQVAEVMDLEAAAYPKCMRDQAAEPATMMDGVYNGEYGNIQEWRTILYSMRAAEASRGDSGRPFTDNSGKVVGIVLGGGPDGRRTRLSVIGFDKKLKAREIAYSEAIPWTRAPALLLLPMVIACTYNSNTFDCSKPSCQDCCITAEPKKAMTMLKDNLNDPNYWDLLIAVTTCSSARKKRAVSTSPVAVYDTQILAAHAAASPYRAYCPDCDGTACISPIAIDEVVSSGSDHVLRIRVGSQSGVTAKGGAAGETSLRYLGRDGKVYAADNTRLVVRTTAKCDVLQATGHYILANCPVGQSLTVAATLDGTRHQCTTVFEHQVTEKFTRERSKGHHLSDLTKKCTRFSTTPKKSALYLVDVYDALPTSVEISTVVTCNERQCTVRVPPGTTVKFDKRCKNAAKETVTFTSDSQTFTCEEPVLTAASITQGKPHLRSSMLPSGGKEVKARIPFPFPPETATCRVSIAPLPSITYEESDVLLAGTAKYPVLLTTRNLGFHSNATSEWIQGKYLRRIPVTPQGIELMLGNNAPLHFWSSVRYASGDADAYPWELLVHHIKHHPEYAWAFVGVACGLLAVAACMFACACNRVRYSLLANTFNPNPPPLTALTAALCCIPGARADQPYLDIIAYLWTNSKVAFGLQCAAPVACMLIVTYALRHCRLCCNSFLGVRGWSALLVILAYVQSCKAYEHTVVVPMDPRAPSYEAVINRNGYDPLKLTIAVNFTVISPTTALEYWTCAGVPVVEPPHVGCCTSVSCPSDLSTLHAFTGKAVSDVHCDVHTNVYPLLWGAAHCFCSTENTQVSAVAATVSEFCAQDSERAEAFSVHSSSVTAEILVTLGEVVTAVHVYVDGVTSARGTDLKIVAGPITTDYSPFDRKVVRIGEEVYNYDWPPYGAGRPGTFGDIQARSTNYVKPNDLYGDIGIEVLQPTNDHVHVAYTYTTSGLLRWLQDAPKPLSVTAPHGCKISANPLLALDCGVGAVPMSINIPDAKFTRKLKDPKPSALKCVVDSCEYGVDYGGAATITYEGHEAGKCGIHSLTPGVPLRTSVVEVVAGANTVKTTFSSPTPEVTLEVEICSAIVKCASECTPPKEHVVAARPRHGSDTGGYISGPAMRWAGRIVGNPSGPVSSSLAVTYCVVKKCRSKRIRIVKS.

Disordered regions lie at residues 18–41 (FAPA…EPQV) and 61–128 (AGLA…RISV). The interval 48–81 (ALANQMSALQLQVAGLAGQARVDRRGPRRVQKNK) is host transcription inhibition. The segment covering 73–86 (GPRRVQKNKQKKKN) has biased composition (basic residues). Positions 74 to 120 (PRRVQKNKQKKKNSSNGEKPKEKKKKQKQQEKKGSGGEKAKKPRNRP) match the Nuclear localization signal motif. The segment covering 101–113 (KQQEKKGSGGEKA) has biased composition (basic and acidic residues). Positions 101–135 (KQQEKKGSGGEKAKKPRNRPGKEVRISVKRARQST) are binding to the viral RNA. Positions 120-134 (PGKEVRISVKRARQS) are ribosome-binding. The 150-residue stretch at 134 to 283 (STFPVYHDGA…EIAYSEAIPW (150 aa)) folds into the Peptidase S3 domain. Residue His-160 is the Charge relay system of the active site. The Nuclear export signal signature appears at 165-175 (FDHPELADIKF). The active-site Charge relay system is Asp-182. Residues 203 to 213 (MDGVYNGEYGN) are dimerization of the capsid protein. Catalysis depends on Ser-234, which acts as the Charge relay system. The segment at 240 to 244 (DNSGK) is dimerization of the capsid protein. Positions 284-303 (TRAPALLLLPMVIACTYNSN) are functions as an uncleaved signal peptide for the precursor of protein E3/E2. Cystine bridges form between Cys-298/Cys-307, Cys-382/Cys-488, Cys-385/Cys-390, Cys-455/Cys-469, and Cys-517/Cys-634. Over 355–735 (AVSTSPVAVY…VHHIKHHPEY (381 aa)) the chain is Extracellular. A helical membrane pass occupies residues 736-756 (AWAFVGVACGLLAVAACMFAC). Residues 757-792 (ACNRVRYSLLANTFNPNPPPLTALTAALCCIPGARA) are Cytoplasmic-facing. A transient transmembrane before p62-6K protein processing region spans residues 761–785 (VRYSLLANTFNPNPPPLTALTAALC). Residues Cys-785 and Cys-786 are each lipidated (S-palmitoyl cysteine; by host). Over 793-808 (DQPYLDIIAYLWTNSK) the chain is Extracellular. The helical transmembrane segment at 809 to 829 (VAFGLQCAAPVACMLIVTYAL) threads the bilayer. Over 830–834 (RHCRL) the chain is Cytoplasmic. The helical transmembrane segment at 835–855 (CCNSFLGVRGWSALLVILAYV) threads the bilayer. Residues 856–1287 (QSCKAYEHTV…YISGPAMRWA (432 aa)) lie on the Extracellular side of the membrane. Cystine bridges form between Cys-910–Cys-985, Cys-923–Cys-965, Cys-924–Cys-967, Cys-929–Cys-949, Cys-1135–Cys-1147, Cys-1177–Cys-1253, Cys-1182–Cys-1257, and Cys-1204–Cys-1247. The E1 fusion peptide loop stretch occupies residues 955–972 (VYPLLWGAAHCFCSTENT). A helical transmembrane segment spans residues 1288 to 1309 (GRIVGNPSGPVSSSLAVTYCVV). Over 1310–1322 (KKCRSKRIRIVKS) the chain is Cytoplasmic. Residue Cys-1312 is the site of S-stearoyl cysteine; by host attachment.

Homodimer. Homomultimer. Interacts with host karyopherin KPNA4; this interaction allows the nuclear import of the viral capsid protein. Interacts with spike glycoprotein E2. Interacts with host IRAK1; the interaction leads to inhibition of IRAK1-dependent signaling. As to quaternary structure, the precursor of protein E3/E2 and E1 form a heterodimer shortly after synthesis. In terms of assembly, interacts with spike glycoprotein E2. The precursor of protein E3/E2 and E1 form a heterodimer shortly after synthesis. Processing of the precursor of protein E3/E2 into E2 and E3 results in a heterodimer of the spike glycoproteins E2 and E1. Spike at virion surface are constituted of three E2-E1 heterodimers. After target cell attachment and endocytosis, E1 change conformation to form homotrimers. Interacts with 6K protein. Interacts with spike glycoprotein E1. Processing of the precursor of protein E3/E2 into E2 and E3 results in a heterodimer of the spike glycoproteins E2 and E1. Spike at virion surface are constituted of a trimer of E2-E1 heterodimers. Interacts with 6K protein. As to quaternary structure, oligomer. Interacts with spike glycoprotein E1. Interacts with spike glycoprotein E2. Structural polyprotein: Specific enzymatic cleavages in vivo yield mature proteins. Capsid protein is auto-cleaved during polyprotein translation, unmasking a signal peptide at the N-terminus of the precursor of E3/E2. The remaining polyprotein is then targeted to the host endoplasmic reticulum, where host signal peptidase cleaves it into pE2, 6K and E1 proteins. pE2 is further processed to mature E3 and E2 by host furin in trans-Golgi vesicle. In terms of processing, palmitoylated via thioester bonds. These palmitoylations may induce disruption of the C-terminus transmembrane. This would result in the reorientation of E2 C-terminus from lumenal to cytoplasmic side. Post-translationally, N-glycosylated. Palmitoylated via thioester bonds.

Its subcellular location is the virion. It is found in the host cytoplasm. The protein localises to the host cell membrane. It localises to the host nucleus. The protein resides in the virion membrane. Its subcellular location is the host Golgi apparatus. It is found in the host trans-Golgi network. The protein localises to the host endoplasmic reticulum. The catalysed reaction is Autocatalytic release of the core protein from the N-terminus of the togavirus structural polyprotein by hydrolysis of a -Trp-|-Ser- bond.. Forms an icosahedral capsid with a T=4 symmetry composed of 240 copies of the capsid protein surrounded by a lipid membrane through which penetrate 80 spikes composed of trimers of E1-E2 heterodimers. The capsid protein binds to the viral RNA genome at a site adjacent to a ribosome binding site for viral genome translation following genome release. Possesses a protease activity that results in its autocatalytic cleavage from the nascent structural protein. Following its self-cleavage, the capsid protein transiently associates with ribosomes, and within several minutes the protein binds to viral RNA and rapidly assembles into icosahedric core particles. The resulting nucleocapsid eventually associates with the cytoplasmic domain of the spike glycoprotein E2 at the cell membrane, leading to budding and formation of mature virions. In case of infection, new virions attach to target cells and after clathrin-mediated endocytosis their membrane fuses with the host endosomal membrane. This leads to the release of the nucleocapsid into the cytoplasm, followed by an uncoating event necessary for the genomic RNA to become accessible. The uncoating might be triggered by the interaction of capsid proteins with ribosomes. Binding of ribosomes would release the genomic RNA since the same region is genomic RNA-binding and ribosome-binding. Specifically inhibits interleukin-1 receptor-associated kinase 1/IRAK1-dependent signaling during viral entry, representing a means by which the alphaviruses may evade innate immune detection and activation prior to viral gene expression. Functionally, provides the signal sequence for the translocation of the precursor of protein E3/E2 to the host endoplasmic reticulum. Furin-cleaved E3 remains associated with spike glycoprotein E1 and mediates pH protection of the latter during the transport via the secretory pathway. After virion release from the host cell, the assembly protein E3 is gradually released in the extracellular space. Its function is as follows. Plays a role in viral attachment to target host cell, by binding to the cell receptor. Synthesized as a p62 precursor which is processed by furin at the cell membrane just before virion budding, giving rise to E2-E1 heterodimer. The p62-E1 heterodimer is stable, whereas E2-E1 is unstable and dissociate at low pH. p62 is processed at the last step, presumably to avoid E1 fusion activation before its final export to cell surface. E2 C-terminus contains a transitory transmembrane that would be disrupted by palmitoylation, resulting in reorientation of the C-terminal tail from lumenal to cytoplasmic side. This step is critical since E2 C-terminus is involved in budding by interacting with capsid proteins. This release of E2 C-terminus in cytoplasm occurs lately in protein export, and precludes premature assembly of particles at the endoplasmic reticulum membrane. In terms of biological role, acts as a viroporin that participates in virus glycoprotein processing and transport to the plasma membrane, cell permeabilization and budding of viral particles. Disrupts the calcium homeostasis of the cell, probably at the endoplasmic reticulum level. This leads to cytoplasmic calcium elevation. Because of its lipophilic properties, the 6K protein is postulated to influence the selection of lipids that interact with the transmembrane domains of the glycoproteins, which, in turn, affects the deformability of the bilayer required for the extreme curvature that occurs as budding proceeds. Present in low amount in virions, about 3% compared to viral glycoproteins. Class II viral fusion protein. Fusion activity is inactive as long as E1 is bound to E2 in mature virion. After virus attachment to target cell and endocytosis, acidification of the endosome induce dissociation of E1/E2 heterodimer and concomitant trimerization of the E1 subunits. This E1 trimer is fusion active, and promotes release of viral nucleocapsid in cytoplasm after endosome and viral membrane fusion. Efficient fusion requires the presence of cholesterol and sphingolipid in the target membrane. The chain is Structural polyprotein from Oncorhynchus mykiss (Rainbow trout).